Consider the following 596-residue polypeptide: Linalool synthase TPS3, chloroplastic (596 aa).

Residues 1-39 (MISSLNPLFTTHRSGVIAQQFFASSAAASINSVSSLKIA) constitute a chloroplast transit peptide. Arg-308, Asp-345, Asp-349, Arg-486, and Asn-489 together coordinate (2E)-geranyl diphosphate. The Mg(2+) site is built by Asp-345 and Asp-349. The short motif at 345–349 (DDIYD) is the DDXXD motif element. Mg(2+) is bound by residues Asn-489, Thr-493, and Ser-497.

Belongs to the terpene synthase family. Tpsb subfamily. As to quaternary structure, monomer. The cofactor is Mg(2+). Mn(2+) serves as cofactor. Expressed in flowers and fruits.

It localises to the plastid. The protein localises to the chloroplast. It catalyses the reaction (2E)-geranyl diphosphate = beta-myrcene + diphosphate. The catalysed reaction is (2E)-geranyl diphosphate + H2O = linalool + diphosphate. It carries out the reaction (2E)-geranyl diphosphate = (Z)-beta-ocimene + diphosphate. The enzyme catalyses (2E)-geranyl diphosphate = (E)-beta-ocimene + diphosphate. It functions in the pathway secondary metabolite biosynthesis; terpenoid biosynthesis. In terms of biological role, monoterpene synthase (mono-TPS) involved in the biosynthesis of monoterpenes natural products, constituent of coffee beverage aroma. Catalyzes the conversion of (2E)-geranyl diphosphate (GPP) into linalool and beta-myrcene, and, as minor products, cis-ocimene and trans-ocimene. Not able to use geranylgeranyl pyrophosphate (GGPP) and farnesyl pyrophosphate (FPP) as substrates. This is Linalool synthase TPS3, chloroplastic from Coffea arabica (Arabian coffee).